We begin with the raw amino-acid sequence, 430 residues long: Histidine--tRNA ligase (430 aa).

Belongs to the class-II aminoacyl-tRNA synthetase family. As to quaternary structure, homodimer.

Its subcellular location is the cytoplasm. It catalyses the reaction tRNA(His) + L-histidine + ATP = L-histidyl-tRNA(His) + AMP + diphosphate + H(+). The protein is Histidine--tRNA ligase of Acinetobacter baylyi (strain ATCC 33305 / BD413 / ADP1).